A 415-amino-acid polypeptide reads, in one-letter code: Dynein assembly factor with WD repeat domains 1 (415 aa).

WD repeat units lie at residues 90–129 (AHIL…ELHT), 132–172 (GHRN…CFYT), 175–214 (GHTA…EVST), 217–256 (GHFA…KVHV), 259–298 (GHRG…CLAT), 301–340 (GHND…CLCQ), 343–384 (GHKG…QVLE), and 385–415 (GHSD…RIWH).

Belongs to the WD repeat WDR69 family. Expressed in organs bearing motile cilia, including the pronephros, otic vesicles and Kupffer's vesicle.

It is found in the cytoplasm. Its subcellular location is the cytoskeleton. The protein resides in the flagellum basal body. The protein localises to the flagellum axoneme. In terms of biological role, required for axonemal dynein assembly and ciliary motility in ciliated organs, including Kupffer's vesicle, during embryogenesis. Facilitates the onset of robust cilia motility during development. In Danio rerio (Zebrafish), this protein is Dynein assembly factor with WD repeat domains 1 (daw1).